A 79-amino-acid polypeptide reads, in one-letter code: Defensin-like protein 272 (79 aa).

The first 24 residues, 1–24, serve as a signal peptide directing secretion; it reads MSSKIKFVALLIVVISLLLNNAQS. Disulfide bonds link Cys34–Cys77, Cys43–Cys63, Cys49–Cys75, and Cys53–Cys76.

It belongs to the DEFL family.

The protein localises to the secreted. The sequence is that of Defensin-like protein 272 from Arabidopsis thaliana (Mouse-ear cress).